Reading from the N-terminus, the 668-residue chain is tRNA 5-methylaminomethyl-2-thiouridine biosynthesis bifunctional protein MnmC (668 aa).

The tract at residues 1–245 is tRNA (mnm(5)s(2)U34)-methyltransferase; that stretch reads MKHYSIQPAN…KREMLCGVME (245 aa). The FAD-dependent cmnm(5)s(2)U34 oxidoreductase stretch occupies residues 270–668; that stretch reads IGGGIACALL…LLKGKAVKAG (399 aa).

This sequence in the N-terminal section; belongs to the methyltransferase superfamily. tRNA (mnm(5)s(2)U34)-methyltransferase family. In the C-terminal section; belongs to the DAO family. It depends on FAD as a cofactor.

It is found in the cytoplasm. It catalyses the reaction 5-aminomethyl-2-thiouridine(34) in tRNA + S-adenosyl-L-methionine = 5-methylaminomethyl-2-thiouridine(34) in tRNA + S-adenosyl-L-homocysteine + H(+). Its function is as follows. Catalyzes the last two steps in the biosynthesis of 5-methylaminomethyl-2-thiouridine (mnm(5)s(2)U) at the wobble position (U34) in tRNA. Catalyzes the FAD-dependent demodification of cmnm(5)s(2)U34 to nm(5)s(2)U34, followed by the transfer of a methyl group from S-adenosyl-L-methionine to nm(5)s(2)U34, to form mnm(5)s(2)U34. This is tRNA 5-methylaminomethyl-2-thiouridine biosynthesis bifunctional protein MnmC from Shigella boydii serotype 4 (strain Sb227).